A 190-amino-acid chain; its full sequence is ADP-ribosylation factor-like protein 6 (190 aa).

G2 is lipidated: N-myristoyl glycine. GTP-binding positions include 24 to 31 (GLDNSGKT), T50, 69 to 73 (DMAGQ), G72, 130 to 133 (NKMD), and A164. Mg(2+) is bound by residues T31 and T50.

It belongs to the small GTPase superfamily. Arf family.

It is found in the cytoplasm. This is ADP-ribosylation factor-like protein 6 from Caenorhabditis briggsae.